The chain runs to 783 residues: Cell wall transcription factor ACE2 (783 aa).

Disordered stretches follow at residues 166 to 195 (AINTQSVSPGELLKRSRGSQTPTPTSALPD), 219 to 311 (EEEK…GNSY), 355 to 452 (YQKQ…IHQN), 474 to 497 (AEQPQPQPQPHQQQHQQQQHQPEL), and 535 to 624 (NQNQ…PRRR). 4 stretches are compositionally biased toward polar residues: residues 183–193 (GSQTPTPTSAL), 227–254 (QRMMTQSSPLKRVTTPSQSPFVQQPQTM), 302–311 (KSDSVGGNSY), and 355–371 (YQKQKPVTPPLQSQNDS). Positions 372 to 395 (QQLEPLKTPQPQPKQQQQQQQPNN) are enriched in low complexity. The segment covering 420 to 431 (INGSPDWNSSPE) has biased composition (polar residues). Low complexity-rich tracts occupy residues 483 to 497 (PHQQQHQQQQHQPEL) and 535 to 544 (NQNQNQNQNQ). A compositionally biased stretch (polar residues) spans 545-575 (TKTPYSQQSQFSPTHSNFNLSPAKQLNSNVG). C2H2-type zinc fingers lie at residues 649–673 (YTCTYKNCGKKFTRRYNVRSHIQTH) and 679–701 (FGCQFCPKRFVRQHDLNRHVKGH).

The protein localises to the nucleus. In terms of biological role, transcription factor involved in the RAM (regulation of ACE2 transcription factor and polarized morphogenesis) signaling network that regulates polarized morphogenesis. Regulates expression of genes involved in cell separation such as CHT3, DSE1, and SCW11; or other cell wall genes such as ASH1, DSE4, PIR1, PRY2, and RME1. Required for regulation of morphogenesis, cell separation, adherence, biofilm formation, invasion, as well as virulence in a mouse model of infection. In Candida albicans (strain SC5314 / ATCC MYA-2876) (Yeast), this protein is Cell wall transcription factor ACE2 (ACE2).